Reading from the N-terminus, the 802-residue chain is LPS-assembly protein LptD (802 aa).

Positions 1 to 25 (MARLFSLKPLVLALGLCFGTHCAAA) are cleaved as a signal peptide.

The protein belongs to the LptD family. Component of the lipopolysaccharide transport and assembly complex. Interacts with LptE and LptA.

The protein resides in the cell outer membrane. Its function is as follows. Together with LptE, is involved in the assembly of lipopolysaccharide (LPS) at the surface of the outer membrane. This Neisseria meningitidis serogroup B (strain ATCC BAA-335 / MC58) protein is LPS-assembly protein LptD.